Reading from the N-terminus, the 83-residue chain is MCCNYYRNCCGGCGYGSGWSSGCGYGCGYGCGYGSGCRYGSGYGTGCGYGCGYGSGCGYGCGYSSSCCGYRPLCYRRCYSSCY.

In terms of assembly, interacts with hair keratins.

In the hair cortex, hair keratin intermediate filaments are embedded in an interfilamentous matrix, consisting of hair keratin-associated proteins (KRTAP), which are essential for the formation of a rigid and resistant hair shaft through their extensive disulfide bond cross-linking with abundant cysteine residues of hair keratins. The matrix proteins include the high-sulfur and high-glycine-tyrosine keratins. The chain is Keratin-associated protein 21-2 (KRTAP21-2) from Homo sapiens (Human).